The chain runs to 660 residues: Bifunctional polymyxin resistance protein ArnA (660 aa).

Residues 1–304 (MKAVIFAYHD…TLGLVAGARL (304 aa)) form a formyltransferase ArnAFT region. The Proton donor; for formyltransferase activity role is filled by histidine 104. (6R)-10-formyltetrahydrofolate contacts are provided by residues arginine 114 and 136–140 (VKRAD). A dehydrogenase ArnADH region spans residues 314-660 (RRIRVLILGV…RSVDIAERAS (347 aa)). Residues aspartate 347 and 368 to 369 (DI) contribute to the NAD(+) site. UDP-alpha-D-glucuronate-binding positions include alanine 393, tyrosine 398, and 432-433 (TS). Catalysis depends on glutamate 434, which acts as the Proton acceptor; for decarboxylase activity. Residues arginine 460, asparagine 492, 526 to 535 (KLIDGGQQKR), and tyrosine 613 contribute to the UDP-alpha-D-glucuronate site. Arginine 619 acts as the Proton donor; for decarboxylase activity in catalysis.

This sequence in the N-terminal section; belongs to the Fmt family. UDP-L-Ara4N formyltransferase subfamily. The protein in the C-terminal section; belongs to the NAD(P)-dependent epimerase/dehydratase family. UDP-glucuronic acid decarboxylase subfamily. In terms of assembly, homohexamer, formed by a dimer of trimers.

The enzyme catalyses UDP-alpha-D-glucuronate + NAD(+) = UDP-beta-L-threo-pentopyranos-4-ulose + CO2 + NADH. The catalysed reaction is UDP-4-amino-4-deoxy-beta-L-arabinose + (6R)-10-formyltetrahydrofolate = UDP-4-deoxy-4-formamido-beta-L-arabinose + (6S)-5,6,7,8-tetrahydrofolate + H(+). It participates in nucleotide-sugar biosynthesis; UDP-4-deoxy-4-formamido-beta-L-arabinose biosynthesis; UDP-4-deoxy-4-formamido-beta-L-arabinose from UDP-alpha-D-glucuronate: step 1/3. Its pathway is nucleotide-sugar biosynthesis; UDP-4-deoxy-4-formamido-beta-L-arabinose biosynthesis; UDP-4-deoxy-4-formamido-beta-L-arabinose from UDP-alpha-D-glucuronate: step 3/3. It functions in the pathway bacterial outer membrane biogenesis; lipopolysaccharide biosynthesis. Its function is as follows. Bifunctional enzyme that catalyzes the oxidative decarboxylation of UDP-glucuronic acid (UDP-GlcUA) to UDP-4-keto-arabinose (UDP-Ara4O) and the addition of a formyl group to UDP-4-amino-4-deoxy-L-arabinose (UDP-L-Ara4N) to form UDP-L-4-formamido-arabinose (UDP-L-Ara4FN). The modified arabinose is attached to lipid A and is required for resistance to polymyxin and cationic antimicrobial peptides. The sequence is that of Bifunctional polymyxin resistance protein ArnA from Salmonella schwarzengrund (strain CVM19633).